The primary structure comprises 631 residues: E3 ubiquitin-protein ligase Zswim2 (631 aa).

The SWIM-type zinc-finger motif lies at 54–87 (FRVLLGNPHECSCPTFLKRGELCKHICWVLLKKF). A UBE2D1-binding region spans residues 139–348 (KDINAGDICP…APGYQCRLCL (210 aa)). An RING-type 1 zinc finger spans residues 147-199 (CPICQEVLLEKKLPVTFCRFGCGNNVHIKCMRILANYQDTGSDSSVLRCPLCR). Residues 230 to 281 (HLGIPCNNCNQLPIEGRCYKCTECVEYHLCQECFDSCCHSSHAFASREKRNQ) form a ZZ-type zinc finger. Zn(2+) contacts are provided by Cys-235, Cys-238, Cys-250, Cys-253, Cys-259, Cys-262, His-268, and His-271. The RING-type 2 zinc-finger motif lies at 344–386 (CRLCLKSFSFGQYTRLLPCTHKFHRKCIDNWLLHKCNSCPIDR). Positions 589–614 (SKRQNNSMGKVRQKLGHPPRRPAYPP) are disordered. Residues 599–608 (VRQKLGHPPR) are compositionally biased toward basic residues.

In terms of assembly, dimer. Interacts with UBE2D1. Polyubiquitinated. Polyubiquitination is followed by degradation via the proteasome. As to expression, expressed only in testis.

It carries out the reaction S-ubiquitinyl-[E2 ubiquitin-conjugating enzyme]-L-cysteine + [acceptor protein]-L-lysine = [E2 ubiquitin-conjugating enzyme]-L-cysteine + N(6)-ubiquitinyl-[acceptor protein]-L-lysine.. E3 ubiquitin-protein ligase involved in the regulation of Fas-, DR3- and DR4-mediated apoptosis. Functions in conjunction with the UBE2D1, UBE2D3 and UBE2E1 E2 ubiquitin-conjugating enzymes. The chain is E3 ubiquitin-protein ligase Zswim2 (Zswim2) from Mus musculus (Mouse).